The sequence spans 162 residues: ATP synthase subunit b', chloroplastic (162 aa).

The chain crosses the membrane as a helical span at residues 26–46; sequence ATLPLQALQFILLTVLLTFIF.

Belongs to the ATPase B chain family. As to quaternary structure, F-type ATPases have 2 components, F(1) - the catalytic core - and F(0) - the membrane proton channel. F(1) has five subunits: alpha(3), beta(3), gamma(1), delta(1), epsilon(1). F(0) has four main subunits: a(1), b(1), b'(1) and c(10-14). The alpha and beta chains form an alternating ring which encloses part of the gamma chain. F(1) is attached to F(0) by a central stalk formed by the gamma and epsilon chains, while a peripheral stalk is formed by the delta, b and b' chains.

Its subcellular location is the plastid. It is found in the chloroplast thylakoid membrane. F(1)F(0) ATP synthase produces ATP from ADP in the presence of a proton or sodium gradient. F-type ATPases consist of two structural domains, F(1) containing the extramembraneous catalytic core and F(0) containing the membrane proton channel, linked together by a central stalk and a peripheral stalk. During catalysis, ATP synthesis in the catalytic domain of F(1) is coupled via a rotary mechanism of the central stalk subunits to proton translocation. Functionally, component of the F(0) channel, it forms part of the peripheral stalk, linking F(1) to F(0). The b'-subunit is a diverged and duplicated form of b found in plants and photosynthetic bacteria. The chain is ATP synthase subunit b', chloroplastic from Emiliania huxleyi (Coccolithophore).